We begin with the raw amino-acid sequence, 88 residues long: Small ribosomal subunit protein bS20 (88 aa).

The segment at 1-23 (MANSPQAKKRARQNDKARAHNAS) is disordered.

It belongs to the bacterial ribosomal protein bS20 family.

In terms of biological role, binds directly to 16S ribosomal RNA. This chain is Small ribosomal subunit protein bS20, found in Teredinibacter turnerae (strain ATCC 39867 / T7901).